A 426-amino-acid chain; its full sequence is uncharacterized protein (426 aa).

The tract at residues E23–T42 is disordered. Residues R26 to T42 show a composition bias toward polar residues.

It belongs to the serpin family.

This is an uncharacterized protein from Thermococcus kodakarensis (strain ATCC BAA-918 / JCM 12380 / KOD1) (Pyrococcus kodakaraensis (strain KOD1)).